A 262-amino-acid polypeptide reads, in one-letter code: Acyl-[acyl-carrier-protein]--UDP-N-acetylglucosamine O-acyltransferase (262 aa).

Belongs to the transferase hexapeptide repeat family. LpxA subfamily. In terms of assembly, homotrimer.

The protein resides in the cytoplasm. It catalyses the reaction a (3R)-hydroxyacyl-[ACP] + UDP-N-acetyl-alpha-D-glucosamine = a UDP-3-O-[(3R)-3-hydroxyacyl]-N-acetyl-alpha-D-glucosamine + holo-[ACP]. Its pathway is glycolipid biosynthesis; lipid IV(A) biosynthesis; lipid IV(A) from (3R)-3-hydroxytetradecanoyl-[acyl-carrier-protein] and UDP-N-acetyl-alpha-D-glucosamine: step 1/6. In terms of biological role, involved in the biosynthesis of lipid A, a phosphorylated glycolipid that anchors the lipopolysaccharide to the outer membrane of the cell. This is Acyl-[acyl-carrier-protein]--UDP-N-acetylglucosamine O-acyltransferase from Herminiimonas arsenicoxydans.